The primary structure comprises 932 residues: UPF0182 protein Dred_1797 (932 aa).

Helical transmembrane passes span 11 to 31 (LVILAGALLFSLIGWGAGLYI), 53 to 73 (IGLRVLVGIIMFLLLLINLML), 118 to 138 (LTLAFTLLSMALGFLYSSSVA), 180 to 200 (ILASAIFLNIVLVALVYLVTD), 209 to 229 (IFRFPSARYHLSVLAALFFVI), 264 to 284 (YKALMILSLVTAIIIIANIFL), and 292 to 312 (YAIGGLLVTSILLGSVYPAII). The tract at residues 861-883 (DRPQQGVPPATDQPAGQQPAPEK) is disordered.

The protein belongs to the UPF0182 family.

Its subcellular location is the cell membrane. The polypeptide is UPF0182 protein Dred_1797 (Desulforamulus reducens (strain ATCC BAA-1160 / DSM 100696 / MI-1) (Desulfotomaculum reducens)).